The chain runs to 343 residues: Ribosomal RNA small subunit methyltransferase C (343 aa).

Belongs to the methyltransferase superfamily. RsmC family. Monomer.

It is found in the cytoplasm. The enzyme catalyses guanosine(1207) in 16S rRNA + S-adenosyl-L-methionine = N(2)-methylguanosine(1207) in 16S rRNA + S-adenosyl-L-homocysteine + H(+). In terms of biological role, specifically methylates the guanine in position 1207 of 16S rRNA in the 30S particle. This is Ribosomal RNA small subunit methyltransferase C from Escherichia coli (strain 55989 / EAEC).